The sequence spans 328 residues: P2Y purinoceptor 6 (328 aa).

Topologically, residues 1-27 (MEWDNGTGQALGLPPTTCVYRENFKQL) are extracellular. Asn-5 carries N-linked (GlcNAc...) asparagine glycosylation. The chain crosses the membrane as a helical span at residues 28–48 (LLPPVYSAVLAAGLPLNICVI). At 49 to 62 (TQICTSRRALTRTA) the chain is on the cytoplasmic side. Residues 63–83 (VYTLNLALADLLYACSLPLLI) traverse the membrane as a helical segment. Residues 84–101 (YNYAQGDHWPFGDFACRL) lie on the Extracellular side of the membrane. An intrachain disulfide couples Cys-99 to Cys-177. A helical membrane pass occupies residues 102–122 (VRFLFYANLHGSILFLTCISF). Residues 123-144 (QRYLGICHPLAPWHKRGGRRAA) are Cytoplasmic-facing. A helical transmembrane segment spans residues 145-165 (WLVCVAVWLAVTTQCLPTAIF). The Extracellular portion of the chain corresponds to 166–194 (AATGIQRNRTVCYDLSPPALATHYMPYGM). A helical transmembrane segment spans residues 195 to 215 (ALTVIGFLLPFAALLACYCLL). At 216-236 (ACRLCRQDGPAEPVAQERRGK) the chain is on the cytoplasmic side. Residues 237–257 (AARMAVVVAAAFAISFLPFHI) form a helical membrane-spanning segment. Residues 258–280 (TKTAYLAVRSTPGVPCTVLEAFA) lie on the Extracellular side of the membrane. Residues 281–303 (AAYKGTRPFASANSVLDPILFYF) traverse the membrane as a helical segment. Topologically, residues 304-328 (TQKKFRRRPHELLQKLTAKWQRQGR) are cytoplasmic.

Belongs to the G-protein coupled receptor 1 family.

The protein resides in the cell membrane. Functionally, receptor for extracellular UDP &gt; UTP &gt; ATP. The activity of this receptor is mediated by G proteins which activate a phosphatidylinositol-calcium second messenger system. This Homo sapiens (Human) protein is P2Y purinoceptor 6 (P2RY6).